Consider the following 168-residue polypeptide: MHRRAIYPGTFDPVTNGHADLIERAARLFKHVIIGIASNPSKQPRFSLEERVAQVNLVTAHLKNVEVVGFTGLLVDFAKEQHASVLIRGLRAVSDFEYEFQLANMNRRLSPDLESVFLTPAEENSFISSTLVKEVALHGGDVSQFVHPQIAAALKLKVAQIQLDKEGK.

T10 is a binding site for substrate. ATP is bound by residues 10-11 (TF) and H18. Substrate contacts are provided by K42, L74, and R88. ATP-binding positions include 89-91 (GLR), E99, and 124-130 (NSFISST).

It belongs to the bacterial CoaD family. Homohexamer. Mg(2+) is required as a cofactor.

It localises to the cytoplasm. It carries out the reaction (R)-4'-phosphopantetheine + ATP + H(+) = 3'-dephospho-CoA + diphosphate. It participates in cofactor biosynthesis; coenzyme A biosynthesis; CoA from (R)-pantothenate: step 4/5. Reversibly transfers an adenylyl group from ATP to 4'-phosphopantetheine, yielding dephospho-CoA (dPCoA) and pyrophosphate. This is Phosphopantetheine adenylyltransferase from Shewanella frigidimarina (strain NCIMB 400).